The sequence spans 207 residues: Outer-membrane lipoprotein LolB (207 aa).

Residues 1-21 (MPQPDFRLIRLLPLAALVLTA) form the signal peptide. Cys22 is lipidated: N-palmitoyl cysteine. Cys22 carries the S-diacylglycerol cysteine lipid modification.

It belongs to the LolB family. Monomer.

Its subcellular location is the cell outer membrane. In terms of biological role, plays a critical role in the incorporation of lipoproteins in the outer membrane after they are released by the LolA protein. This is Outer-membrane lipoprotein LolB from Shigella sonnei (strain Ss046).